The sequence spans 513 residues: Na(+)/H(+) antiporter NhaB (513 aa).

The next 12 membrane-spanning stretches (helical) occupy residues 23-43, 52-72, 97-117, 120-140, 144-164, 202-222, 238-258, 303-323, 348-368, 391-411, 447-467, and 475-495; these read LALI…PFVA, IFTL…LLAI, LLLM…LFIF, LLLS…AAAF, FLDA…FYGI, LMMH…VGEP, FFLR…LTCL, AIIG…VGLI, TESL…AVII, LFYI…VGTI, ATPN…APLI, and VWMA…CVEF.

It belongs to the NhaB Na(+)/H(+) (TC 2.A.34) antiporter family.

The protein resides in the cell inner membrane. It catalyses the reaction 2 Na(+)(in) + 3 H(+)(out) = 2 Na(+)(out) + 3 H(+)(in). Na(+)/H(+) antiporter that extrudes sodium in exchange for external protons. This chain is Na(+)/H(+) antiporter NhaB, found in Escherichia coli O6:H1 (strain CFT073 / ATCC 700928 / UPEC).